A 320-amino-acid chain; its full sequence is Cilia- and flagella-associated protein 77 (320 aa).

The disordered stretch occupies residues 1–27; sequence MPEARSSGPDLTRWRKQQQPVRRTVSQ. A compositionally biased stretch (polar residues) spans 17–27; sequence QQQPVRRTVSQ.

The protein belongs to the CFAP77 family. Microtubule inner protein component of sperm flagellar doublet microtubules. Expressed in airway epithelial cells.

It is found in the cytoplasm. Its subcellular location is the cytoskeleton. The protein resides in the cilium axoneme. It localises to the flagellum axoneme. Its function is as follows. Microtubule inner protein (MIP) part of the dynein-decorated doublet microtubules (DMTs) in cilia axoneme, which is required for motile cilia beating. The protein is Cilia- and flagella-associated protein 77 of Homo sapiens (Human).